The sequence spans 310 residues: NAD kinase 1 (310 aa).

The Proton acceptor role is filled by Asp68. NAD(+) is bound by residues Asp68–Gly69, Asn145–Glu146, Arg156, His175, and Asp177.

It belongs to the NAD kinase family. The cofactor is a divalent metal cation.

It localises to the cytoplasm. The enzyme catalyses NAD(+) + ATP = ADP + NADP(+) + H(+). Its function is as follows. Involved in the regulation of the intracellular balance of NAD and NADP, and is a key enzyme in the biosynthesis of NADP. Catalyzes specifically the phosphorylation on 2'-hydroxyl of the adenosine moiety of NAD to yield NADP. This is NAD kinase 1 from Gloeobacter violaceus (strain ATCC 29082 / PCC 7421).